Consider the following 72-residue polypeptide: DNA-directed RNA polymerase subunit omega (72 aa).

It belongs to the RNA polymerase subunit omega family. The RNAP catalytic core consists of 2 alpha, 1 beta, 1 beta' and 1 omega subunit. When a sigma factor is associated with the core the holoenzyme is formed, which can initiate transcription.

It carries out the reaction RNA(n) + a ribonucleoside 5'-triphosphate = RNA(n+1) + diphosphate. In terms of biological role, promotes RNA polymerase assembly. Latches the N- and C-terminal regions of the beta' subunit thereby facilitating its interaction with the beta and alpha subunits. The chain is DNA-directed RNA polymerase subunit omega from Campylobacter lari (strain RM2100 / D67 / ATCC BAA-1060).